A 206-amino-acid polypeptide reads, in one-letter code: Large ribosomal subunit protein uL4 (206 aa).

A disordered region spans residues Ala-43–Ser-78. The span at Lys-49–His-58 shows a compositional bias: basic and acidic residues. A compositionally biased stretch (basic residues) spans Thr-59 to Gly-70.

The protein belongs to the universal ribosomal protein uL4 family. In terms of assembly, part of the 50S ribosomal subunit.

In terms of biological role, one of the primary rRNA binding proteins, this protein initially binds near the 5'-end of the 23S rRNA. It is important during the early stages of 50S assembly. It makes multiple contacts with different domains of the 23S rRNA in the assembled 50S subunit and ribosome. Forms part of the polypeptide exit tunnel. This Ralstonia nicotianae (strain ATCC BAA-1114 / GMI1000) (Ralstonia solanacearum) protein is Large ribosomal subunit protein uL4.